We begin with the raw amino-acid sequence, 131 residues long: Small ribosomal subunit protein bS6 (131 aa).

Residues 100–131 (SPMVKAKDERRSRDYSLEDANMDAEEAGDSEE) are disordered. Basic and acidic residues predominate over residues 104 to 115 (KAKDERRSRDYS). The segment covering 119–131 (ANMDAEEAGDSEE) has biased composition (acidic residues).

This sequence belongs to the bacterial ribosomal protein bS6 family.

Its function is as follows. Binds together with bS18 to 16S ribosomal RNA. The protein is Small ribosomal subunit protein bS6 of Photorhabdus laumondii subsp. laumondii (strain DSM 15139 / CIP 105565 / TT01) (Photorhabdus luminescens subsp. laumondii).